The chain runs to 194 residues: Protein GrpE (194 aa).

A compositionally biased stretch (basic and acidic residues) spans 1-12; that stretch reads MNKQKNNRERTP. The segment at 1–44 is disordered; that stretch reads MNKQKNNRERTPQPEQDTERDEQLTNSHENDIDSAPAAEENDKV.

The protein belongs to the GrpE family. Homodimer.

The protein resides in the cytoplasm. Functionally, participates actively in the response to hyperosmotic and heat shock by preventing the aggregation of stress-denatured proteins, in association with DnaK and GrpE. It is the nucleotide exchange factor for DnaK and may function as a thermosensor. Unfolded proteins bind initially to DnaJ; upon interaction with the DnaJ-bound protein, DnaK hydrolyzes its bound ATP, resulting in the formation of a stable complex. GrpE releases ADP from DnaK; ATP binding to DnaK triggers the release of the substrate protein, thus completing the reaction cycle. Several rounds of ATP-dependent interactions between DnaJ, DnaK and GrpE are required for fully efficient folding. In Porphyromonas gingivalis (strain ATCC BAA-308 / W83), this protein is Protein GrpE.